Consider the following 607-residue polypeptide: Rap1 GTPase-GDP dissociation stimulator 1-B (607 aa).

5 ARM repeats span residues 79–118 (ELMR…NICY), 170–211 (DSLQ…NLAE), 347–390 (DGNC…NLAI), 391–431 (PVVN…MLID), and 479–519 (SKDV…LIAA).

Interacts with ralB. Probably interacts with the post-translationally isoprenylated (geranyl-geranylation) forms of ral proteins. Interacts with both GDP-bound and GTP-bound forms of ralA, but interaction is much stronger with ralA-GDP.

Its subcellular location is the cytoplasm. It localises to the cytosol. It is found in the endoplasmic reticulum. The protein resides in the mitochondrion. Functionally, stimulates GDP/GTP exchange reaction of a group of small GTP-binding proteins (G proteins) including Rap1a/Rap1b, RhoA, RhoB and KRas, by stimulating the dissociation of GDP from and the subsequent binding of GTP to each small G protein. In Xenopus laevis (African clawed frog), this protein is Rap1 GTPase-GDP dissociation stimulator 1-B (rap1gds1-b).